A 120-amino-acid polypeptide reads, in one-letter code: MDKKVSRLRRAVPTRRKIAQLRVHRLSVFRSNLHIYANIISPEGDRVLVSASTLEAEVRAQLGGAGKGGNATAAALVGKRVAEKAKAAGIELVAFDRSGFRYHGRVKALAEAAREAGLKF.

This sequence belongs to the universal ribosomal protein uL18 family. In terms of assembly, part of the 50S ribosomal subunit; part of the 5S rRNA/L5/L18/L25 subcomplex. Contacts the 5S and 23S rRNAs.

This is one of the proteins that bind and probably mediate the attachment of the 5S RNA into the large ribosomal subunit, where it forms part of the central protuberance. In Bordetella bronchiseptica (strain ATCC BAA-588 / NCTC 13252 / RB50) (Alcaligenes bronchisepticus), this protein is Large ribosomal subunit protein uL18.